The following is an 897-amino-acid chain: Major intrinsically disordered Notch2-binding receptor 1 (897 aa).

The Cytoplasmic segment spans residues M1 to K872. Disordered stretches follow at residues A405–C433, S450–E502, and T688–D766. Composition is skewed to polar residues over residues A411–S423 and N452–T471. The span at E472–E498 shows a compositional bias: basic and acidic residues. Over residues E697–H724 the composition is skewed to polar residues. Residues N725–Q756 show a composition bias toward basic and acidic residues. A helical transmembrane segment spans residues I873–C893. At T894–S897 the chain is on the extracellular side.

It belongs to the MINAR family.

The protein resides in the cell membrane. Functionally, intrinsically disordered protein which may negatively regulate mTOR signaling pathway by stabilizing the mTOR complex component DEPTOR. Negatively regulates angiogenesis. Negatively regulates cell growth. May play a role in neuronal development. The sequence is that of Major intrinsically disordered Notch2-binding receptor 1 (minar1) from Danio rerio (Zebrafish).